A 218-amino-acid chain; its full sequence is Phosphoribosylformylglycinamidine synthase subunit PurQ (218 aa).

A Glutamine amidotransferase type-1 domain is found at 2-218 (SIAVLRFPGT…GARMLRGLAC (217 aa)). C86 (nucleophile) is an active-site residue. Catalysis depends on residues H195 and E197.

Part of the FGAM synthase complex composed of 1 PurL, 1 PurQ and 2 PurS subunits.

It is found in the cytoplasm. The catalysed reaction is N(2)-formyl-N(1)-(5-phospho-beta-D-ribosyl)glycinamide + L-glutamine + ATP + H2O = 2-formamido-N(1)-(5-O-phospho-beta-D-ribosyl)acetamidine + L-glutamate + ADP + phosphate + H(+). The enzyme catalyses L-glutamine + H2O = L-glutamate + NH4(+). It participates in purine metabolism; IMP biosynthesis via de novo pathway; 5-amino-1-(5-phospho-D-ribosyl)imidazole from N(2)-formyl-N(1)-(5-phospho-D-ribosyl)glycinamide: step 1/2. Its function is as follows. Part of the phosphoribosylformylglycinamidine synthase complex involved in the purines biosynthetic pathway. Catalyzes the ATP-dependent conversion of formylglycinamide ribonucleotide (FGAR) and glutamine to yield formylglycinamidine ribonucleotide (FGAM) and glutamate. The FGAM synthase complex is composed of three subunits. PurQ produces an ammonia molecule by converting glutamine to glutamate. PurL transfers the ammonia molecule to FGAR to form FGAM in an ATP-dependent manner. PurS interacts with PurQ and PurL and is thought to assist in the transfer of the ammonia molecule from PurQ to PurL. The protein is Phosphoribosylformylglycinamidine synthase subunit PurQ of Wolinella succinogenes (strain ATCC 29543 / DSM 1740 / CCUG 13145 / JCM 31913 / LMG 7466 / NCTC 11488 / FDC 602W) (Vibrio succinogenes).